We begin with the raw amino-acid sequence, 241 residues long: MSQVKYKRIILKVSGEALAGEKGTGINPEVIKHLAEEIKSVHDMGVEIGIVCGGGNMWRGETGANLGMERAQADYMGMLATIMNGLALQDGLENLGVPTRVQTSIEMRQIAEPYIRRKAVRHLEKGRVVIFGGGTGNPYFSTDTTAALRAAEINADVILMAKNGVDGVYSADPKVDPNAKKYSELTQLDLISKNLKVMDSTASSLSMDNNIPLVVFNVNKPGNIKKVVMGENIGTVIKGDK.

ATP is bound at residue 12-15 (KVSG). An involved in allosteric activation by GTP region spans residues 20–25 (GEKGTG). UMP is bound at residue G54. Positions 55 and 59 each coordinate ATP. Residues D74 and 135-142 (TGNPYFST) each bind UMP. Residues N163, Y169, and D172 each coordinate ATP.

It belongs to the UMP kinase family. Homohexamer.

The protein localises to the cytoplasm. The enzyme catalyses UMP + ATP = UDP + ADP. Its pathway is pyrimidine metabolism; CTP biosynthesis via de novo pathway; UDP from UMP (UMPK route): step 1/1. Allosterically activated by GTP. Inhibited by UTP. In terms of biological role, catalyzes the reversible phosphorylation of UMP to UDP. This is Uridylate kinase from Lactobacillus johnsonii (strain CNCM I-12250 / La1 / NCC 533).